The primary structure comprises 157 residues: Endoribonuclease YbeY (157 aa).

Positions 116, 120, and 126 each coordinate Zn(2+).

This sequence belongs to the endoribonuclease YbeY family. The cofactor is Zn(2+).

Its subcellular location is the cytoplasm. Its function is as follows. Single strand-specific metallo-endoribonuclease involved in late-stage 70S ribosome quality control and in maturation of the 3' terminus of the 16S rRNA. The chain is Endoribonuclease YbeY from Blochmanniella pennsylvanica (strain BPEN).